The sequence spans 155 residues: Small ribosomal subunit protein uS7cz/uS7cy (155 aa).

Belongs to the universal ribosomal protein uS7 family. As to quaternary structure, part of the 30S ribosomal subunit.

Its subcellular location is the plastid. It localises to the chloroplast. Its function is as follows. One of the primary rRNA binding proteins, it binds directly to 16S rRNA where it nucleates assembly of the head domain of the 30S subunit. The protein is Small ribosomal subunit protein uS7cz/uS7cy (rps7-A) of Acorus calamus var. americanus (American sweet flag).